Consider the following 535-residue polypeptide: T-complex protein 1 subunit zeta 2 (535 aa).

Belongs to the TCP-1 chaperonin family. Heterooligomeric complex of about 850 to 900 kDa that forms two stacked rings, 12 to 16 nm in diameter.

The protein resides in the cytoplasm. Molecular chaperone; assists the folding of proteins upon ATP hydrolysis. Known to play a role, in vitro, in the folding of actin and tubulin. This is T-complex protein 1 subunit zeta 2 from Arabidopsis thaliana (Mouse-ear cress).